Consider the following 243-residue polypeptide: Adapter protein MecA (243 aa).

A disordered region spans residues 119–140 (NQVEDGQGIAHNPTKDTNDLDP).

Belongs to the MecA family. As to quaternary structure, homodimer.

Enables the recognition and targeting of unfolded and aggregated proteins to the ClpC protease or to other proteins involved in proteolysis. The polypeptide is Adapter protein MecA (Lactiplantibacillus plantarum (strain ATCC BAA-793 / NCIMB 8826 / WCFS1) (Lactobacillus plantarum)).